The following is a 443-amino-acid chain: Lysine-specific demethylase 8 (443 aa).

Positions Thr139 to Asn165 are enriched in basic and acidic residues. A disordered region spans residues Thr139 to Gly174. In terms of domain architecture, JmjC spans Gly298–Ser443. The Fe cation site is built by His348, Asp350, and His427.

It depends on Fe(2+) as a cofactor.

The protein resides in the nucleus. The catalysed reaction is N(6),N(6)-dimethyl-L-lysyl(36)-[histone H3] + 2 2-oxoglutarate + 2 O2 = L-lysyl(36)-[histone H3] + 2 formaldehyde + 2 succinate + 2 CO2. Its function is as follows. Histone demethylase required for G2/M phase cell cycle progression. Specifically demethylates dimethylated 'Lys-36' (H3K36me2) of histone H3, an epigenetic repressive mark, thereby acting as a transcription activator. May play a role in the regulation of the circadian clock. This chain is Lysine-specific demethylase 8 (kdm8), found in Xenopus tropicalis (Western clawed frog).